The sequence spans 75 residues: Putative antitoxin VapB29 (75 aa).

In terms of biological role, possibly the antitoxic component of a type II toxin-antitoxin (TA) system. Its cognate toxin is VapC29 (Potential). The protein is Putative antitoxin VapB29 (vapB29) of Mycobacterium tuberculosis (strain CDC 1551 / Oshkosh).